Reading from the N-terminus, the 812-residue chain is MTGIEQKTPVGGSETGGADGLYAVLPLRDIVVFPHMIVPLFVGREKSIRALEEVMGVDKQILLATQKNAADDDPAPDAIYEIGTIANVLQLLKLPDGTVKVLVEGTARAKISKFTDREDYHEAYAAALQEPEEDAVEIEALARSVVSDFENYVKLNKKISPEVVGTASQIDDYSKLADTVASHLAIKIPEKQEMLSVLSVRERLEKALSFMEAEISVLQVEKRIRSRVKRQMEKTQREYYLNEQMKAIQKELGDSEDGRDEVAEIEERITKTKLSKEAREKALAELKKLRSMSPMSAEATVVRNYLDWLLSIPWGKKSKVKQDLNFAQEVLDAEHFGLGKVKERIVEYLAVQARSTKIKGPILCLVGPPGVGKTSLARSIAKATGREYVRMSLGGVRDEAEIRGHRRTYIGSMPGKVIQSMKKAKKSNPLFLLDEIDKMGQDFRGDPSSAMLEVLDPKQNATFMDHYLEVEYDLSNVMFVTTANTMNIPGPLLDRMEIIRIAGYTEDEKLEIAKRHLLPKAIKDHALQPKEFSVTEDALRNVIRHYTREAGVRSLEREVMTLARKAVTEILKTKKKSVKITDKNLSDYLGVEKFRFGQIDGEDQVGVVTGLAWTEVGGELLTIEGVMMPGKGRMTVTGNLRDVMKESISAAASYVRSRAIDFGIEPPLFDKRDIHVHVPEGATPKDGPSAGIAMVTAIVSVLTGIPVRKDIAMTGEVTLRGRVLPIGGLKEKLLATLRGGIKKVLIPEENAKDLAEIPDNVKNNLEIVPVSRVGEVLKHALVRQPEPIEWTEQENPTAVPPVEDEAGASLAH.

Residues 22–215 (YAVLPLRDIV…KALSFMEAEI (194 aa)) form the Lon N-terminal domain. 367-374 (GPPGVGKT) is a binding site for ATP. The region spanning 602-783 (EDQVGVVTGL…GEVLKHALVR (182 aa)) is the Lon proteolytic domain. Residues serine 689 and lysine 732 contribute to the active site. The segment at 787–812 (PIEWTEQENPTAVPPVEDEAGASLAH) is disordered.

This sequence belongs to the peptidase S16 family. In terms of assembly, homohexamer. Organized in a ring with a central cavity.

The protein localises to the cytoplasm. It carries out the reaction Hydrolysis of proteins in presence of ATP.. In terms of biological role, ATP-dependent serine protease that mediates the selective degradation of mutant and abnormal proteins as well as certain short-lived regulatory proteins. Required for cellular homeostasis and for survival from DNA damage and developmental changes induced by stress. Degrades polypeptides processively to yield small peptide fragments that are 5 to 10 amino acids long. Binds to DNA in a double-stranded, site-specific manner. This is Lon protease from Brucella melitensis biotype 1 (strain ATCC 23456 / CCUG 17765 / NCTC 10094 / 16M).